Here is a 679-residue protein sequence, read N- to C-terminus: MAAEGERQNLLSKHLERQVKILQSICKNDSEACNLLDLGYILEKNLFAPADSRKADSGPDPQLNFFPPFLTPECLALHYPFFLTTSIPPSCKGNRSGTDTYSQFCSRSSCLEDIPDPSEWDDSLGNVSLMAELKENQKLAPLEEDSPRTTAVDESKCSSKQSYSYPALTFPPQVQKILFDYLIGESQDPNDLDSEYKLAFTDEDLPQEGQAEKTKQRETLGAVATFGAVLLSIQRLFTHPVVIKNTQESLHYTFLHGFVRMVHLLTEVNLSEFVTFHGLTHRNRLNNPVQHRQLEGADRFDYILDTIYLYLVFAWQTAMDIWSQTIDEETERNLRERVKSLKPELAGANYAEACSLVSNTVFPPLLREALVVNIPDFVNQTQLANFRLFINNKSNVPASVCPALPSDFIPLTYEESHPVLWAHVMLLRLAAFLLNHGQYVQAPDESSISLPLCDCNLCAPHRMPCYNPMLLNEILSIGKFEVRGPDTEGKGFSLTPQVFANAYMEKFYSEDFHPHQVVLYKDDKAQFKTEPTAAVIREPKLLALIRESQTRREKSILKRGGGRYLDPQTGEVLGESSHGIGEELQDGPSYGEKPSHDLPSYGKQNPVAGRGLQAAGERVRRDAGSPSQPTEQLGRRTPQRGGTGRDKRGRGRGGRSATPDPRQETAEKESLQGTRRESS.

Residues 178 to 232 form a binding to host EIF4G region; that stretch reads LFDYLIGESQDPNDLDSEYKLAFTDEDLPQEGQAEKTKQRETLGAVATFGAVLLS. Positions 235–353 constitute an RRM domain; that stretch reads RLFTHPVVIK…ELAGANYAEA (119 aa). A phosphotyrosine; by host mark is found at Tyr252 and Tyr564. The segment at 552 to 679 is disordered; that stretch reads REKSILKRGG…SLQGTRRESS (128 aa). Residues 661–679 are compositionally biased toward basic and acidic residues; it reads PRQETAEKESLQGTRRESS.

This sequence belongs to the adenoviridae shutoff protein family. In terms of assembly, monomer. Interacts with hexon protein; this interaction allows chaperoning and trimerization of hexon proteins. Interacts (via N-terminus) with host initiation factor EIF4G (via C-terminus). Interacts (via RRM domain) with viral mRNAs that contain the tripartite leader; this interaction allows ribosome shunting and expression of viral late mRNAs. In terms of processing, might be cleaved by the viral protease. Post-translationally, phosphorylated. Tyrosine phosphorylation enhances preferential binding to tripartite leader mRNAs and allows ribosome shunting. Methylated. Asymmetric dimethylation by host PRMT1 of the Arg/Gly-rich region may regulate shutoff protein binding to hexon and promote the capsid assembly in the nucleus.

The protein localises to the host cytoplasm. In terms of biological role, protein that inhibits host translation while promoting late viral translation by ribosome shunting. Blocks host cap-dependent translation by binding to eIF4G, displacing MKNK1 from cap initiation complexes and preventing EIF4E phosphorylation. Binds to the tripartite leader sequence of viral late mRNAs and recruits host eIF4G, PABPC1/poly-A binding protein and 40S ribosomes subunits on viral mRNAs, allowing ribosome shunting and efficient translation of late viral mRNAs even though conventional translation via ribosome scanning from the cap has been shut off in the host cell. During assembly, acts as a chaperone protein that helps hexon proteins assembly into trimers. The polypeptide is Shutoff protein (Snake adenovirus serotype 1 (SnAdV-1)).